A 225-amino-acid chain; its full sequence is Ribonuclease 3 (225 aa).

Positions 5 to 127 (LDRLQRSLGH…VFAATFLDQG (123 aa)) constitute an RNase III domain. E40 lines the Mg(2+) pocket. D44 is an active-site residue. D113 and E116 together coordinate Mg(2+). E116 is an active-site residue. The DRBM domain occupies 154–224 (DPKTALQELL…AELALAQLRK (71 aa)).

It belongs to the ribonuclease III family. In terms of assembly, homodimer. The cofactor is Mg(2+).

The protein localises to the cytoplasm. The catalysed reaction is Endonucleolytic cleavage to 5'-phosphomonoester.. Functionally, digests double-stranded RNA. Involved in the processing of primary rRNA transcript to yield the immediate precursors to the large and small rRNAs (23S and 16S). Processes some mRNAs, and tRNAs when they are encoded in the rRNA operon. Processes pre-crRNA and tracrRNA of type II CRISPR loci if present in the organism. This chain is Ribonuclease 3, found in Aromatoleum aromaticum (strain DSM 19018 / LMG 30748 / EbN1) (Azoarcus sp. (strain EbN1)).